Reading from the N-terminus, the 208-residue chain is 2-phospho-L-lactate guanylyltransferase (208 aa).

The protein belongs to the CofC family. In terms of assembly, homodimer.

It carries out the reaction (2S)-2-phospholactate + GTP + H(+) = (2S)-lactyl-2-diphospho-5'-guanosine + diphosphate. It functions in the pathway cofactor biosynthesis; coenzyme F420 biosynthesis. In terms of biological role, guanylyltransferase that catalyzes the activation of (2S)-2-phospholactate (2-PL) as (2S)-lactyl-2-diphospho-5'-guanosine, via the condensation of 2-PL with GTP. It is involved in the biosynthesis of coenzyme F420, a hydride carrier cofactor. This is 2-phospho-L-lactate guanylyltransferase from Methanosarcina acetivorans (strain ATCC 35395 / DSM 2834 / JCM 12185 / C2A).